A 210-amino-acid polypeptide reads, in one-letter code: uncharacterized protein (210 aa).

The protein to E.coli YkgK.

This is an uncharacterized protein from Escherichia coli (strain K12).